Here is a 188-residue protein sequence, read N- to C-terminus: Dual specificity protein phosphatase 18 (188 aa).

A Tyrosine-protein phosphatase domain is found at 19–160 (GLSQITKSLY…LIHYEFQLFG (142 aa)). The sufficient for mitochondrial localization stretch occupies residues 95-141 (MKQGRTLLHCAAGVSRSAALCLAYLMKYHAMSLLDAHTWTKSCRPII). Cys104 functions as the Phosphocysteine intermediate in the catalytic mechanism.

The protein belongs to the protein-tyrosine phosphatase family. Non-receptor class dual specificity subfamily.

The protein localises to the cytoplasm. The protein resides in the nucleus. Its subcellular location is the mitochondrion inner membrane. It catalyses the reaction O-phospho-L-tyrosyl-[protein] + H2O = L-tyrosyl-[protein] + phosphate. It carries out the reaction O-phospho-L-seryl-[protein] + H2O = L-seryl-[protein] + phosphate. The enzyme catalyses O-phospho-L-threonyl-[protein] + H2O = L-threonyl-[protein] + phosphate. Functionally, can dephosphorylate single and diphosphorylated synthetic MAPK peptides, with preference for the phosphotyrosine and diphosphorylated forms over phosphothreonine. In vitro, dephosphorylates p-nitrophenyl phosphate (pNPP). This chain is Dual specificity protein phosphatase 18 (DUSP18), found in Pongo abelii (Sumatran orangutan).